Consider the following 437-residue polypeptide: Trigger factor (437 aa).

The 86-residue stretch at 163 to 248 folds into the PPIase FKBP-type domain; that stretch reads GDRVIIDFEG…LNNVSEPTLP (86 aa).

Belongs to the FKBP-type PPIase family. Tig subfamily.

Its subcellular location is the cytoplasm. The catalysed reaction is [protein]-peptidylproline (omega=180) = [protein]-peptidylproline (omega=0). Involved in protein export. Acts as a chaperone by maintaining the newly synthesized protein in an open conformation. Functions as a peptidyl-prolyl cis-trans isomerase. This chain is Trigger factor, found in Neisseria gonorrhoeae (strain NCCP11945).